We begin with the raw amino-acid sequence, 99 residues long: uncharacterized protein (99 aa).

Residues 6 to 26 form a helical membrane-spanning segment; sequence LVCSIVFILFILFYDLKIGTI. One can recognise a LysM domain in the interval 48 to 95; the sequence is KTVKVKPGDTVMSIVGSAGSPDDIVKDFEALNPNVKANAIQAGTAYKF.

It is found in the secreted. It localises to the cell wall. The protein resides in the membrane. This is an uncharacterized protein from Bacillus subtilis (strain 168).